The following is a 2873-amino-acid chain: Fibrillin-1 (2873 aa).

Positions 1–24 are cleaved as a signal peptide; it reads MRRGGLLEVALAFALLLESYTSHG. The propeptide occupies 25 to 44; the sequence is ADANLEAGSLKETRANRAKR. The fibrillin unique N-terminal (FUN) domain stretch occupies residues 45–81; that stretch reads RGGGGHDALKGPNVCGSRYNAYCCPGWKTLPGGNQCI. The N-terminal domain stretch occupies residues 45–452; that stretch reads RGGGGHDALK…PPRVLPFNVT (408 aa). Disulfide bonds link Cys59-Cys68, Cys67-Cys80, Cys85-Cys94, Cys89-Cys100, Cys102-Cys111, Cys119-Cys129, Cys123-Cys134, Cys136-Cys145, Cys150-Cys160, Cys154-Cys166, and Cys168-Cys177. EGF-like domains are found at residues 81 to 112, 115 to 146, and 147 to 178; these read IVPI…PSCG, SIQH…THCG, and QPVC…PQCE. Residues 119–329 form an interaction with MFAP4 region; sequence CSIRCMNGGS…YTSPDGTRCV (211 aa). Positions 184–236 constitute a TB 1 domain; the sequence is GPCFTVVSNQMCQGQLSGIVCTKTLCCATVGRAWGHPCEMCPAQPHPCRRGFI. A hybrid domain 1 region spans residues 195–221; sequence CQGQLSGIVCTKTLCCATVGRAWGHPC. An EGF-like 4; calcium-binding domain is found at 246 to 287; it reads DVDECQAIPGMCQGGNCINTVGSFECKCPAGHKFNEVSQKCE. 6 cysteine pairs are disulfide-bonded: Cys250–Cys262, Cys257–Cys271, Cys273–Cys286, Cys292–Cys304, Cys299–Cys313, and Cys315–Cys328. The O-linked (Glc) serine glycan is linked to Ser268. In terms of domain architecture, EGF-like 5; calcium-binding spans 288 to 329; sequence DIDECSTIPGVCDGGECTNTVSSYFCKCPPGFYTSPDGTRCV. The TB 2 domain maps to 334–389; sequence GYCYTALANGRCSNQLPQSITKMQCCCDLGRCWSPGVTVAPEMCPIRSTEDFNKLC. Residue Asn450 is glycosylated (N-linked (GlcNAc...) asparagine). The 41-residue stretch at 451-491 folds into the EGF-like 6 domain; that stretch reads VTDYCQLVRYLCQNGRCIPTPGSYRCECNKGFQLDIRGECI. Cystine bridges form between Cys455–Cys467, Cys462–Cys476, Cys478–Cys490, Cys496–Cys506, Cys501–Cys515, Cys517–Cys530, Cys536–Cys548, Cys543–Cys557, Cys559–Cys572, Cys578–Cys589, Cys584–Cys598, Cys600–Cys613, Cys619–Cys630, Cys625–Cys639, and Cys641–Cys654. A glycan (O-linked (Glc) serine) is linked at Ser473. Residues 492–531 form the EGF-like 7; calcium-binding domain; it reads DVDECEKNPCTGGECINNQGSYTCHCRAGYQSTLTRTECR. O-linked (Glc) serine glycosylation occurs at Ser512. Positions 532 to 573 constitute an EGF-like 8; calcium-binding domain; sequence DIDECLQNGRICNNGRCINTDGSFHCVCNAGFHVTRDGKNCE. Positions 574–614 constitute an EGF-like 9; calcium-binding domain; it reads DMDECSIRNMCLNGMCINEDGSFKCICKPGFQLASDGRYCK. The EGF-like 10; calcium-binding domain occupies 615 to 655; it reads DINECETPGICMNGRCVNTDGSYRCECFPGLAVGLDGRVCV. The TB 3 domain maps to 661–713; it reads STCYGGYRRGQCVKPLFGAVTKSECCCASTEYAFGEPCQPCPAQNSAEYQALC. In terms of domain architecture, EGF-like 11; calcium-binding spans 725 to 766; it reads DINECALDPDICPNGICENLRGTYKCICNSGYEVDITGKNCV. Intrachain disulfides connect Cys729–Cys741, Cys736–Cys750, Cys752–Cys765, Cys771–Cys783, Cys778–Cys792, Cys794–Cys807, Cys813–Cys823, Cys818–Cys832, Cys834–Cys847, Cys855–Cys877, Cys864–Cys889, Cys878–Cys892, Cys898–Cys910, Cys916–Cys928, Cys923–Cys937, and Cys939–Cys952. The 42-residue stretch at 767–808 folds into the EGF-like 12; calcium-binding domain; it reads DINECVLNSLLCDNGQCRNTPGSFVCTCPKGFVYKPDLKTCE. Residues 809 to 848 form the EGF-like 13; calcium-binding domain; sequence DIDECESSPCINGVCKNSPGSFICECSPESTLDPTKTICI. Residues 853-904 enclose the TB 4 domain; sequence GTCWQTVIDGRCEININGATLKSECCSSLGAAWGSPCTICQLDPICGKGFSR. Positions 862–887 are hybrid domain 2; that stretch reads GRCEININGATLKSECCSSLGAAWGS. The EGF-like 14; calcium-binding domain occupies 912–953; it reads DINECEVFPGVCKNGLCVNSRGSFKCECPNGMTLDATGRICL. A TB 5 domain is found at 958 to 1010; sequence ETCFLKYDDEECTLPIAGRHRMDACCCSVGAAWGTEECEECPLRNSREYEELC. Residues 1030-1071 enclose the EGF-like 15; calcium-binding domain; it reads DINECKMIPSLCTHGKCRNTIGSFKCRCDSGFALDSEERNCT. Disulfide bonds link Cys1034–Cys1046, Cys1041–Cys1055, Cys1057–Cys1070, Cys1076–Cys1088, Cys1083–Cys1097, Cys1099–Cys1113, Cys1119–Cys1131, Cys1126–Cys1140, Cys1142–Cys1155, Cys1161–Cys1173, Cys1168–Cys1182, Cys1184–Cys1197, Cys1203–Cys1214, Cys1210–Cys1223, Cys1225–Cys1238, Cys1244–Cys1256, Cys1251–Cys1265, Cys1267–Cys1280, Cys1286–Cys1298, Cys1293–Cys1307, Cys1309–Cys1322, Cys1328–Cys1341, Cys1335–Cys1350, Cys1352–Cys1363, Cys1369–Cys1382, Cys1376–Cys1391, Cys1393–Cys1404, Cys1410–Cys1422, Cys1417–Cys1431, Cys1433–Cys1446, Cys1452–Cys1463, Cys1458–Cys1472, Cys1474–Cys1487, Cys1493–Cys1504, Cys1499–Cys1513, Cys1515–Cys1528, Cys1536–Cys1564, Cys1551–Cys1576, Cys1565–Cys1579, Cys1566–Cys1591, Cys1612–Cys1624, Cys1619–Cys1633, Cys1635–Cys1648, Cys1654–Cys1665, Cys1660–Cys1674, and Cys1676–Cys1689. An N-linked (GlcNAc...) asparagine glycan is attached at Asn1069. An EGF-like 16; calcium-binding domain is found at 1072 to 1114; it reads DIDECRISPDLCGRGQCVNTPGDFECKCDEGYESGFMMMKNCM. Residues 1115-1156 form the EGF-like 17; calcium-binding domain; the sequence is DIDECQRDPLLCRGGICHNTEGSYRCECPPGHQLSPNISACI. Ser1137 is a glycosylation site (O-linked (Glc) serine). Asn1151 carries an N-linked (GlcNAc...) asparagine glycan. Positions 1157 to 1198 constitute an EGF-like 18; calcium-binding domain; that stretch reads DINECELSANLCPHGRCVNLIGKYQCACNPGYHPTHDRLFCV. Residues 1199–1239 form the EGF-like 19; calcium-binding domain; sequence DIDECSIMNGGCETFCTNSDGSYECSCQPGFALMPDQRSCT. Ser1220 carries an O-linked (Glc) serine glycan. In terms of domain architecture, EGF-like 20; calcium-binding spans 1240–1281; sequence DIDECEDNPNICDGGQCTNIPGEYRCLCYDGFMASEDMKTCV. Residues 1282–1323 enclose the EGF-like 21; calcium-binding domain; sequence DVNECDLNPNICLSGTCENTKGSFICHCDMGYSGKKGKTGCT. Ser1304 carries O-linked (Glc) serine glycosylation. In terms of domain architecture, EGF-like 22; calcium-binding spans 1324–1364; the sequence is DINECEIGAHNCGRHAVCTNTAGSFKCSCSPGWIGDGIKCT. O-linked (Glc) serine glycosylation occurs at Ser1347. In terms of domain architecture, EGF-like 23; calcium-binding spans 1365–1405; that stretch reads DLDECSNGTHMCSQHADCKNTMGSYRCLCKDGYTGDGFTCT. Asn1371 carries N-linked (GlcNAc...) asparagine glycosylation. Residue Ser1388 is glycosylated (O-linked (Glc) serine). In terms of domain architecture, EGF-like 24; calcium-binding spans 1406 to 1447; sequence DLDECSENLNLCGNGQCLNAPGGYRCECDMGFVPSADGKACE. The EGF-like 25; calcium-binding domain maps to 1448 to 1488; sequence DIDECSLPNICVFGTCHNLPGLFRCECEIGYELDRSGGNCT. Residue Asn1486 is glycosylated (N-linked (GlcNAc...) asparagine). Residues 1489–1529 form the EGF-like 26; calcium-binding domain; the sequence is DVNECLDPTTCISGNCVNTPGSYTCDCPPDFELNPTRVGCV. Ser1510 carries an O-linked (Glc) serine glycan. Residues 1530–2733 are C-terminal domain; that stretch reads DTRSGNCYLD…GYPKRGRKRR (1204 aa). Positions 1534–1591 constitute a TB 6 domain; that stretch reads GNCYLDIRPRGDNGDTACSNEIGVGVSKASCCCSLGKAWGTPCELCPSVNTSEYKILC. The short motif at 1543–1545 is the Cell attachment site element; that stretch reads RGD. Residue Asn1583 is glycosylated (N-linked (GlcNAc...) asparagine). Residues 1608–1649 form the EGF-like 27; calcium-binding domain; the sequence is DIDECQELPGLCQGGKCINTFGSFQCRCPTGYYLNEDTRVCD. Ser1630 carries O-linked (Glc) serine glycosylation. Positions 1650 to 1690 constitute an EGF-like 28; calcium-binding domain; that stretch reads DVNECETPGICGPGTCYNTVGNYTCICPPDYMQVNGGNNCM. Asn1671 is a glycosylation site (N-linked (GlcNAc...) asparagine). The TB 7 domain occupies 1695-1750; that stretch reads SLCYRNYYADNQTCDGELLFNMTKKMCCCSYNIGRAWNKPCEQCPIPSTDEFATLC. Residues Asn1705 and Asn1715 are each glycosylated (N-linked (GlcNAc...) asparagine). An EGF-like 29; calcium-binding domain is found at 1768 to 1809; the sequence is DIDECREIPGVCENGVCINMVGSFRCECPVGFFYNDKLLVCE. Intrachain disulfides connect Cys1772-Cys1784, Cys1779-Cys1793, Cys1795-Cys1808, Cys1814-Cys1826, Cys1820-Cys1835, Cys1837-Cys1849, Cys1855-Cys1867, Cys1862-Cys1876, Cys1878-Cys1891, Cys1897-Cys1907, Cys1902-Cys1916, Cys1918-Cys1930, Cys1936-Cys1949, Cys1944-Cys1958, Cys1960-Cys1973, Cys1979-Cys1991, Cys1986-Cys2000, Cys2002-Cys2013, Cys2019-Cys2031, Cys2026-Cys2040, Cys2042-Cys2055, Cys2063-Cys2085, Cys2072-Cys2098, Cys2086-Cys2101, Cys2087-Cys2113, Cys2133-Cys2144, Cys2139-Cys2153, Cys2155-Cys2166, Cys2172-Cys2183, Cys2178-Cys2192, Cys2194-Cys2206, Cys2212-Cys2223, Cys2219-Cys2232, Cys2234-Cys2247, Cys2253-Cys2267, Cys2260-Cys2276, Cys2278-Cys2291, Cys2297-Cys2309, Cys2304-Cys2318, and Cys2320-Cys2333. An EGF-like 30; calcium-binding domain is found at 1810-1850; the sequence is DIDECQNGPVCQRNAECINTAGSYRCDCKPGYRLTSTGQCN. Ser1832 carries an O-linked (Glc) serine glycan. The EGF-like 31; calcium-binding domain maps to 1851–1892; sequence DRNECQEIPNICSHGQCIDTVGSFYCLCHTGFKTNVDQTMCL. Residue Ser1873 is glycosylated (O-linked (Glc) serine). Residues 1893–1931 enclose the EGF-like 32; calcium-binding domain; that stretch reads DINECERDACGNGTCRNTIGSFNCRCNHGFILSHNNDCI. Asn1904 carries N-linked (GlcNAc...) asparagine glycosylation. O-linked (Glc) serine glycosylation is present at Ser1913. Positions 1932–1974 constitute an EGF-like 33; calcium-binding domain; sequence DVDECATGNGNLCRNGQCVNTVGSFQCRCNEGYEVAPDGRTCV. A glycan (O-linked (Glc) serine) is linked at Ser1955. One can recognise an EGF-like 34; calcium-binding domain in the interval 1975–2014; that stretch reads DINECVLDPGKCAPGTCQNLDGSYRCICPPGYSLQNDKCE. The EGF-like 35; calcium-binding domain maps to 2015-2056; that stretch reads DIDECVEEPEICALGTCSNTEGSFKCLCPEGFSLSSTGRRCQ. A glycan (O-linked (Glc) serine) is linked at Ser2037. In terms of domain architecture, TB 8 spans 2061 to 2113; sequence SYCYAKFEGGKCSSPKSRNHSKQECCCALKGEGWGDPCELCPTEPDEAFRQIC. N-linked (GlcNAc...) asparagine glycosylation is present at Asn2079. The EGF-like 36; calcium-binding domain occupies 2129-2167; sequence DMDECKEPDVCRHGQCINTDGSYRCECPFGYILEGNECV. An O-linked (Glc) serine glycan is attached at Ser2150. The EGF-like 37; calcium-binding domain occupies 2168-2207; sequence DTDECSVGNPCGNGTCKNVIGGFECTCEEGFEPGPMMTCE. An N-linked (GlcNAc...) asparagine glycan is attached at Asn2180. Residues 2208-2248 enclose the EGF-like 38; calcium-binding domain; the sequence is DINECAQNPLLCAFRCVNTYGSYECKCPVGYVLREDRRMCK. The O-linked (Glc) serine glycan is linked to Ser2229. The EGF-like 39; calcium-binding domain occupies 2249–2292; the sequence is DEDECAEGKHDCTEKQMECKNLIGTYMCICGPGYQRRPDGEGCI. The EGF-like 40; calcium-binding domain maps to 2293 to 2334; the sequence is DENECQTKPGICENGRCLNTLGSYTCECNDGFTASPTQDECL. O-linked (Glc) serine glycosylation occurs at Ser2315. The region spanning 2339 to 2392 is the TB 9 domain; sequence GYCFSEVLQNMCQIGSSNRNPVTKSECCCDGGRGWGPHCEICPFEGTVAYKKLC. In terms of domain architecture, EGF-like 41; calcium-binding spans 2404–2445; it reads DIDECKVIHDVCRNGECVNDRGSYHCICKTGYTPDITGTACV. 21 cysteine pairs are disulfide-bonded: Cys2408-Cys2420, Cys2415-Cys2429, Cys2431-Cys2444, Cys2450-Cys2461, Cys2457-Cys2470, Cys2472-Cys2485, Cys2491-Cys2502, Cys2498-Cys2511, Cys2513-Cys2524, Cys2530-Cys2543, Cys2537-Cys2552, Cys2554-Cys2567, Cys2573-Cys2583, Cys2579-Cys2592, Cys2594-Cys2607, Cys2613-Cys2624, Cys2619-Cys2633, Cys2635-Cys2648, Cys2654-Cys2665, Cys2661-Cys2674, and Cys2676-Cys2688. Positions 2446–2486 constitute an EGF-like 42; calcium-binding domain; the sequence is DLNECNQAPKPCNFICKNTEGSYQCSCPKGYILQEDGRSCK. O-linked (Glc) serine glycosylation occurs at Ser2467. The EGF-like 43; calcium-binding domain maps to 2487-2525; it reads DLDECATKQHNCQFLCVNTIGGFTCKCPPGFTQHHTACI. One can recognise an EGF-like 44; calcium-binding domain in the interval 2526–2568; the sequence is DNNECTSDINLCGSKGVCQNTPGSFTCECQRGFSLDQSGASCE. O-linked (Glc) serine glycosylation occurs at Ser2549. In terms of domain architecture, EGF-like 45; calcium-binding spans 2569–2608; the sequence is DVDECEGNHRCQHGCQNIIGGYRCSCPQGYLQHYQWNQCV. Residues 2609-2649 enclose the EGF-like 46; calcium-binding domain; the sequence is DENECLSAHVCGGASCHNTLGSYKCMCPTGFQYEQFSGGCQ. A glycan (O-linked (Glc) serine) is linked at Ser2630. Positions 2650–2689 constitute an EGF-like 47; calcium-binding domain; that stretch reads DINECGSSQAPCSYGCSNTEGGYLCGCPPGYFRIGQGHCV. A phosphoserine mark is found at Ser2704, Ser2705, and Ser2711. Residues 2728–2747 are disordered; the sequence is RGRKRRSTNETDASDIQDGS. N-linked (GlcNAc...) asparagine glycosylation is found at Asn2736, Asn2752, and Asn2769.

Belongs to the fibrillin family. In terms of assembly, interacts with COL16A1. Interacts with integrin alpha-V/beta-3. Interacts with ADAMTS10; this interaction promotes microfibril assembly. Interacts with THSD4; this interaction promotes fibril formation. Interacts (via N-terminal domain) with FBLN2 and FBLN5. Interacts with ELN. Forms a ternary complex with ELN and FBLN2 or FBLN5 and a significant interaction with ELN seen only in the presence of FBLN2 or FBLN5. Interacts (via N-terminal domain) with LTBP2 (via C-terminal domain) in a Ca(+2)-dependent manner. Interacts (via N-terminal domain) with LTBP1 (via C-terminal domain). Interacts with integrins ITGA5:ITGB1, ITGAV:ITGB3 and ITGAV:ITGB6. Interacts (via N-terminal domain) with BMP2, BMP4, BMP7, BMP10 and GDF5. Interacts (via N-terminal domain) with MFAP2 and MFAP5. Interacts with ADAMTSL5. Interacts with MFAP4. Interacts (via N-terminal domain) with TNFSF11 in a Ca(+2)-dependent manner. Interacts (via N-terminal domain) with EFEMP2; this interaction inhibits EFEMP2 binding to LOX and ELN. Post-translationally, cleavage of N- and C-terminus by furin is required for incorporation into the extracellular matrix and assembly into microfibrils. The C-terminus, which corresponds to the Asprosin chain, was initially thought to constitute a propeptide. Fibrillin-1 and Asprosin chains are still linked together during the secretion from cells, but are subsequently separated by furin, an essential step for incorporation of Fibrillin-1 into the nascent microfibrils. Forms intermolecular disulfide bonds either with other fibrillin-1 molecules or with other components of the microfibrils. In terms of processing, O-glycosylated on serine residues by POGLUT2 and POGLUT3 which is necessary for efficient protein secretion. Strongly expressed during the first week of osteoblast differentiation. As to expression, secreted by white adipose tissue (at protein level).

It is found in the secreted. It localises to the extracellular space. Its subcellular location is the extracellular matrix. In terms of biological role, structural component of the 10-12 nm diameter microfibrils of the extracellular matrix, which conveys both structural and regulatory properties to load-bearing connective tissues. Fibrillin-1-containing microfibrils provide long-term force bearing structural support. In tissues such as the lung, blood vessels and skin, microfibrils form the periphery of the elastic fiber, acting as a scaffold for the deposition of elastin. In addition, microfibrils can occur as elastin-independent networks in tissues such as the ciliary zonule, tendon, cornea and glomerulus where they provide tensile strength and have anchoring roles. Fibrillin-1 also plays a key role in tissue homeostasis through specific interactions with growth factors, such as the bone morphogenetic proteins (BMPs), growth and differentiation factors (GDFs) and latent transforming growth factor-beta-binding proteins (LTBPs), cell-surface integrins and other extracellular matrix protein and proteoglycan components. Regulates osteoblast maturation by controlling TGF-beta bioavailability and calibrating TGF-beta and BMP levels, respectively. Negatively regulates osteoclastogenesis by binding and sequestering an osteoclast differentiation and activation factor TNFSF11. This leads to disruption of TNFSF11-induced Ca(2+) signaling and impairment of TNFSF11-mediated nuclear translocation and activation of transcription factor NFATC1 which regulates genes important for osteoclast differentiation and function. Mediates cell adhesion via its binding to cell surface receptors integrins ITGAV:ITGB3 and ITGA5:ITGB1. Binds heparin and this interaction plays an important role in the assembly of microfibrils. Adipokine secreted by white adipose tissue that plays an important regulatory role in the glucose metabolism of liver, muscle and pancreas. Hormone that targets the liver in response to fasting to increase plasma glucose levels. Binds the olfactory receptor Olfr734 at the surface of hepatocytes and promotes hepatocyte glucose release by activating the protein kinase A activity in the liver, resulting in rapid glucose release into the circulation. May act as a regulator of adaptive thermogenesis by inhibiting browning and energy consumption, while increasing lipid deposition in white adipose tissue. Also acts as an orexigenic hormone that increases appetite: crosses the blood brain barrier and exerts effects on the hypothalamus. In the arcuate nucleus of the hypothalamus, asprosin directly activates orexigenic AgRP neurons and indirectly inhibits anorexigenic POMC neurons, resulting in appetite stimulation. Activates orexigenic AgRP neurons via binding to the olfactory receptor Olfr734. May also play a role in sperm motility in testis via interaction with Olfr734 receptor. The protein is Fibrillin-1 of Mus musculus (Mouse).